The chain runs to 542 residues: CTP synthase (542 aa).

The amidoligase domain stretch occupies residues 1–265 (MTKYIFVTGG…LKPISKELSL (265 aa)). CTP is bound at residue serine 13. Serine 13 lines the UTP pocket. ATP contacts are provided by residues 14–19 (SLGKGI) and aspartate 71. Residues aspartate 71 and glutamate 139 each contribute to the Mg(2+) site. CTP is bound by residues 146-148 (DIE), 186-191 (KSKPTQ), and lysine 222. Residues 186-191 (KSKPTQ) and lysine 222 contribute to the UTP site. In terms of domain architecture, Glutamine amidotransferase type-1 spans 290 to 541 (VLGFVGKYLE…VEATLAISQE (252 aa)). Glycine 352 lines the L-glutamine pocket. The active-site Nucleophile; for glutamine hydrolysis is the cysteine 379. L-glutamine-binding positions include 380-383 (LGMQ), glutamate 403, and arginine 471. Catalysis depends on residues histidine 514 and glutamate 516.

The protein belongs to the CTP synthase family. Homotetramer.

It carries out the reaction UTP + L-glutamine + ATP + H2O = CTP + L-glutamate + ADP + phosphate + 2 H(+). The enzyme catalyses L-glutamine + H2O = L-glutamate + NH4(+). The catalysed reaction is UTP + NH4(+) + ATP = CTP + ADP + phosphate + 2 H(+). The protein operates within pyrimidine metabolism; CTP biosynthesis via de novo pathway; CTP from UDP: step 2/2. Allosterically activated by GTP, when glutamine is the substrate; GTP has no effect on the reaction when ammonia is the substrate. The allosteric effector GTP functions by stabilizing the protein conformation that binds the tetrahedral intermediate(s) formed during glutamine hydrolysis. Inhibited by the product CTP, via allosteric rather than competitive inhibition. Its function is as follows. Catalyzes the ATP-dependent amination of UTP to CTP with either L-glutamine or ammonia as the source of nitrogen. Regulates intracellular CTP levels through interactions with the four ribonucleotide triphosphates. The protein is CTP synthase of Sulfurimonas denitrificans (strain ATCC 33889 / DSM 1251) (Thiomicrospira denitrificans (strain ATCC 33889 / DSM 1251)).